The following is a 142-amino-acid chain: uncharacterized protein (142 aa).

2 helical membrane-spanning segments follow: residues 75–97 and 107–124; these read VFFR…YIVA and LSIV…KLFY.

The protein resides in the cell membrane. This is an uncharacterized protein from Archaeoglobus fulgidus (strain ATCC 49558 / DSM 4304 / JCM 9628 / NBRC 100126 / VC-16).